The primary structure comprises 206 residues: Glycerol-3-phosphate acyltransferase (206 aa).

The next 5 membrane-spanning stretches (helical) occupy residues 14-34, 67-87, 91-111, 124-144, and 148-168; these read IALA…GLIL, ATLL…GYFL, AAII…WIGF, LLGV…AVAF, and YSSL…LILG.

Belongs to the PlsY family. Probably interacts with PlsX.

The protein localises to the cell inner membrane. The enzyme catalyses an acyl phosphate + sn-glycerol 3-phosphate = a 1-acyl-sn-glycero-3-phosphate + phosphate. It functions in the pathway lipid metabolism; phospholipid metabolism. Functionally, catalyzes the transfer of an acyl group from acyl-phosphate (acyl-PO(4)) to glycerol-3-phosphate (G3P) to form lysophosphatidic acid (LPA). This enzyme utilizes acyl-phosphate as fatty acyl donor, but not acyl-CoA or acyl-ACP. The polypeptide is Glycerol-3-phosphate acyltransferase (Rhizobium etli (strain CIAT 652)).